Consider the following 359-residue polypeptide: Membrane-bound lytic murein transglycosylase C (359 aa).

Positions methionine 1–serine 16 are cleaved as a signal peptide. The N-palmitoyl cysteine moiety is linked to residue cysteine 17. The S-diacylglycerol cysteine moiety is linked to residue cysteine 17.

It belongs to the transglycosylase Slt family.

It is found in the cell outer membrane. It carries out the reaction Exolytic cleavage of the (1-&gt;4)-beta-glycosidic linkage between N-acetylmuramic acid (MurNAc) and N-acetylglucosamine (GlcNAc) residues in peptidoglycan, from either the reducing or the non-reducing ends of the peptidoglycan chains, with concomitant formation of a 1,6-anhydrobond in the MurNAc residue.. Murein-degrading enzyme. May play a role in recycling of muropeptides during cell elongation and/or cell division. The sequence is that of Membrane-bound lytic murein transglycosylase C from Escherichia coli O127:H6 (strain E2348/69 / EPEC).